A 371-amino-acid chain; its full sequence is Alginate lyase (371 aa).

An N-terminal signal peptide occupies residues 1 to 28 (MRRPMTLFKRISSPALLALALFGGAAHA). Residues 67 to 68 (SK), 140 to 141 (HT), and Tyr-258 each bind substrate.

Belongs to the polysaccharide lyase 5 family.

It localises to the periplasm. It catalyses the reaction Eliminative cleavage of alginate to give oligosaccharides with 4-deoxy-alpha-L-erythro-hex-4-enuronosyl groups at their non-reducing ends and beta-D-mannuronate at their reducing end.. Its function is as follows. Catalyzes the depolymerization of alginate by cleaving the beta-1,4 glycosidic bond between two adjacent sugar residues via a beta-elimination mechanism. May serve to degrade mislocalized alginate that is trapped in the periplasmic space. The chain is Alginate lyase from Pseudomonas putida (strain ATCC 47054 / DSM 6125 / CFBP 8728 / NCIMB 11950 / KT2440).